The chain runs to 1557 residues: Ras guanine nucleotide exchange factor K (1557 aa).

Residues 1-16 show a composition bias toward pro residues; the sequence is MEPTINPPVNLPPPVP. Disordered regions lie at residues 1–121, 146–181, 195–238, 283–347, 558–619, and 881–937; these read MEPT…SYTV, VETL…KLSV, LYQQ…SPQL, SPLP…GLTP, NNNN…DELS, and TNNN…QVNH. 7 stretches are compositionally biased toward low complexity: residues 17 to 40, 52 to 63, 73 to 90, 102 to 114, 148 to 161, 195 to 207, and 222 to 236; these read SRSN…NNTN, SSPSSPSSPSPS, NNNN…NGNV, ISSP…HTSS, TLSS…KTTT, LYQQ…NPNS, and PPSS…STSP. Residues 283–310 show a composition bias toward pro residues; the sequence is SPLPPPPLTIPNKVPPLPMRLPPPPPPQ. Coiled-coil stretches lie at residues 310 to 338 and 591 to 629; these read QQLD…SNST and NNNN…EEEL. Residues 311–333 are compositionally biased toward low complexity; the sequence is QLDQMYSNNNQQQQQQQQQQQNN. The span at 334 to 343 shows a compositional bias: polar residues; sequence ESNSTTTSEG. Low complexity-rich tracts occupy residues 558 to 610 and 881 to 928; these read NNNN…NNNN and TNNN…TPTT. Residues 1058–1177 enclose the N-terminal Ras-GEF domain; that stretch reads LNAEIDAATL…QIRNCILKRT (120 aa). The tract at residues 1254–1303 is disordered; the sequence is PSISQNTPSSPSLIPSSPRPITSSSSVSSSTLLKSPLSQQAKSRIPETKT. Residues 1261 to 1291 are compositionally biased toward low complexity; the sequence is PSSPSLIPSSPRPITSSSSVSSSTLLKSPLS. The region spanning 1316 to 1549 is the Ras-GEF domain; the sequence is DDEEIARQLT…YHLSLLKEPR (234 aa).

Functionally, promotes the exchange of Ras-bound GDP by GTP. The protein is Ras guanine nucleotide exchange factor K (gefK) of Dictyostelium discoideum (Social amoeba).